The following is a 1262-amino-acid chain: Ras-specific guanine nucleotide-releasing factor 1 (1262 aa).

A PH 1 domain is found at 22–130 (DGTRKGYLSK…WVAAIARASY (109 aa)). S71 carries the post-translational modification Phosphoserine; by PLK2. The region spanning 208–233 (KKIKKVQSFLRGWLCRRKWKNIIQDY) is the IQ domain. The 187-residue stretch at 244–430 (KRNQVVFSML…EELSRIMHDE (187 aa)) folds into the DH domain. A PH 2 domain is found at 460 to 588 (TFVRQGSLMQ…WTSDIIQCVD (129 aa)). S581 and S617 each carry phosphoserine; by PLK2. The 115-residue stretch at 635 to 749 (KVLQIRYASV…RRRKLSLNIP (115 aa)) folds into the N-terminal Ras-GEF domain. The interval 714 to 738 (DAPKSPRASRKFSSPPPLAIGTSSP) is disordered. Phosphoserine is present on S745. S766 carries the post-translational modification Phosphoserine; by PLK2. A disordered region spans residues 800–854 (EEIDVPATIPEKPGELSASRKHSSDVLKEESEDDQNHSDEDNTEVSPVKSPPTPK). Basic and acidic residues predominate over residues 821–839 (HSSDVLKEESEDDQNHSDE). The Ras-GEF domain occupies 1027–1259 (PALEIAEQLT…YESSLLIEPK (233 aa)).

Homooligomer and heterooligomer with RASGRF2. Interacts with USP8, thereby regulating its stability. Phosphorylated by PLK2, leading to ubiquitination and degradation by the proteasome. Post-translationally, ubiquitinated and degraded following phosphorylation by PLK2. In terms of processing, phosphorylated by SRC and LCK. Phosphorylation by LCK increases its capacity to stimulate the GDP/GTP exchange on Ras, whereas its phosphorylation by SRC seems not to have an effect on stimulation activity. In terms of tissue distribution, brain.

In terms of biological role, promotes the exchange of Ras-bound GDP by GTP. The sequence is that of Ras-specific guanine nucleotide-releasing factor 1 (Rasgrf1) from Mus musculus (Mouse).